An 830-amino-acid chain; its full sequence is Lon protease (830 aa).

Residues 1-28 (MTFDTNDDSIAKNSLAPYNQETEQQQEE) form a disordered region. The Lon N-terminal domain maps to 50-245 (IPILPLRDVV…LVITHLTHEA (196 aa)). Position 397-404 (397-404 (GPPGVGKT)) interacts with ATP. Residues 633 to 814 (TLPPGVALGL…DEVLPLAFSE (182 aa)) form the Lon proteolytic domain. Catalysis depends on residues Ser-720 and Lys-763.

This sequence belongs to the peptidase S16 family. As to quaternary structure, homohexamer. Organized in a ring with a central cavity.

The protein resides in the cytoplasm. The enzyme catalyses Hydrolysis of proteins in presence of ATP.. Its function is as follows. ATP-dependent serine protease that mediates the selective degradation of mutant and abnormal proteins as well as certain short-lived regulatory proteins. Required for cellular homeostasis and for survival from DNA damage and developmental changes induced by stress. Degrades polypeptides processively to yield small peptide fragments that are 5 to 10 amino acids long. Binds to DNA in a double-stranded, site-specific manner. The protein is Lon protease of Lawsonia intracellularis (strain PHE/MN1-00).